The sequence spans 96 residues: Neurotoxin beta-KTx 31.1 (96 aa).

Residues 1 to 21 (MQAKRTILLLLLLGMVALSSC) form the signal peptide. Positions 22 to 29 (GLREKHVQ) are excised as a propeptide. The 38-residue stretch at 56–93 (QYGCPIIKDYCSFHCNDLEKHEGYCHGTKCKCNIPNQY) folds into the BetaSPN-type CS-alpha/beta domain. 3 cysteine pairs are disulfide-bonded: C59–C80, C66–C85, and C70–C87.

It belongs to the long chain scorpion toxin family. Class 1 subfamily. In terms of tissue distribution, expressed by the venom gland.

Its subcellular location is the secreted. In terms of biological role, inhibits voltage-gated potassium channel. This Lychas mucronatus (Chinese swimming scorpion) protein is Neurotoxin beta-KTx 31.1.